Reading from the N-terminus, the 365-residue chain is Histidinol-phosphate aminotransferase (365 aa).

N6-(pyridoxal phosphate)lysine is present on K220.

The protein belongs to the class-II pyridoxal-phosphate-dependent aminotransferase family. Histidinol-phosphate aminotransferase subfamily. As to quaternary structure, homodimer. Pyridoxal 5'-phosphate is required as a cofactor.

The catalysed reaction is L-histidinol phosphate + 2-oxoglutarate = 3-(imidazol-4-yl)-2-oxopropyl phosphate + L-glutamate. The protein operates within amino-acid biosynthesis; L-histidine biosynthesis; L-histidine from 5-phospho-alpha-D-ribose 1-diphosphate: step 7/9. The chain is Histidinol-phosphate aminotransferase from Neisseria meningitidis serogroup B (strain ATCC BAA-335 / MC58).